A 429-amino-acid chain; its full sequence is MRTELNQGLIDFLKASPTPFHACASLAQRLESAGYQRLDEREPWPTQSGGRYYVTRNDSSLIAIQLGRRSPLEGGLRLVGAHTDSPCLRVKPQPELNRQGFWQLGVEVYGGALLAPWFDRDLSLAGRVTFRRAGRVESQLIDFKQPIAVIPNLAIHLNREANQGWAINAQNELPPILAQVAGDERGDFRALLAEQLQREHEINADVVLDFELCFYDTQSAALIGLNQDFIAGARLDNLLSCHAGLQALLAAGDRESCVLVCTDHEEIGSCSTCGADGPFLEQVLGRLLPDGDAFVRIMQQSLLVSADNAHGVHPNYADRHDANHGPKLNAGPVIKVNSNQRYATNSETAGFFRHLCFDVEVPVQSFVVRSDMGCGSTIGPITASRLGMRTVDIGLPTFAMHSIRELAGSHDLTHLVKVLTAFYSSPLLP.

Zn(2+)-binding residues include H82, H156, and H401.

The protein belongs to the peptidase M18 family. Requires Zn(2+) as cofactor.

In Azotobacter vinelandii (strain DJ / ATCC BAA-1303), this protein is Probable M18 family aminopeptidase 2.